We begin with the raw amino-acid sequence, 620 residues long: Chaperone protein HtpG (620 aa).

An a; substrate-binding region spans residues 1 to 334 (MTTTDTAPQS…SEDLPLNLSR (334 aa)). Positions 335–548 (EMLQNNPQLA…GLGPDRALER (214 aa)) are b. The c stretch occupies residues 549–620 (MLAQQNRGAA…RLNRLVLRAL (72 aa)).

Belongs to the heat shock protein 90 family. As to quaternary structure, homodimer.

It is found in the cytoplasm. Its function is as follows. Molecular chaperone. Has ATPase activity. This Rhodopseudomonas palustris (strain BisB18) protein is Chaperone protein HtpG.